A 138-amino-acid chain; its full sequence is Large ribosomal subunit protein uL16c (138 aa).

The protein belongs to the universal ribosomal protein uL16 family. Part of the 50S ribosomal subunit.

It localises to the plastid. It is found in the chloroplast. The chain is Large ribosomal subunit protein uL16c from Tetradesmus obliquus (Green alga).